Reading from the N-terminus, the 193-residue chain is Peptidyl-tRNA hydrolase (193 aa).

Y17 is a tRNA binding site. The active-site Proton acceptor is H22. 3 residues coordinate tRNA: Y69, N71, and N117.

Belongs to the PTH family. Monomer.

Its subcellular location is the cytoplasm. It catalyses the reaction an N-acyl-L-alpha-aminoacyl-tRNA + H2O = an N-acyl-L-amino acid + a tRNA + H(+). Hydrolyzes ribosome-free peptidyl-tRNAs (with 1 or more amino acids incorporated), which drop off the ribosome during protein synthesis, or as a result of ribosome stalling. In terms of biological role, catalyzes the release of premature peptidyl moieties from peptidyl-tRNA molecules trapped in stalled 50S ribosomal subunits, and thus maintains levels of free tRNAs and 50S ribosomes. This Leifsonia xyli subsp. xyli (strain CTCB07) protein is Peptidyl-tRNA hydrolase.